An 827-amino-acid polypeptide reads, in one-letter code: Glycerol-3-phosphate acyltransferase 1, mitochondrial (827 aa).

The Cytoplasmic portion of the chain corresponds to 1 to 87; that stretch reads MEESSVTVGT…FFNPSIPSLG (87 aa). Residues 80-120 are important for mitochondrial localization; the sequence is NPSIPSLGLRNVIYINETHTRHRGWLARRLSYILFVQERDV. An intramembrane segment occupies 88-118; it reads LRNVIYINETHTRHRGWLARRLSYILFVQER. Residues 119–827 are Cytoplasmic-facing; sequence DVHKGMFATS…LEYILSFVVL (709 aa). The HXXXXD motif motif lies at 230–235; sequence HRSHID. Arginine 278, arginine 279, lysine 288, arginine 293, and arginine 328 together coordinate CoA. Residue serine 380 is modified to Phosphoserine. Residue arginine 462 participates in CoA binding. 2 positions are modified to phosphoserine: serine 687 and serine 694. N6-acetyllysine occurs at positions 779 and 783.

It belongs to the GPAT/DAPAT family. Highest levels in liver, intermediate levels in muscle and kidney, and lowest levels in lung and brain.

The protein resides in the mitochondrion outer membrane. The enzyme catalyses sn-glycerol 3-phosphate + an acyl-CoA = a 1-acyl-sn-glycero-3-phosphate + CoA. The catalysed reaction is (9Z,12Z)-octadecadienoyl-CoA + sn-glycerol 3-phosphate = 1-(9Z,12Z)-octadecadienoyl-sn-glycero-3-phosphate + CoA. It carries out the reaction sn-glycerol 3-phosphate + (9Z)-octadecenoyl-CoA = 1-(9Z-octadecenoyl)-sn-glycero-3-phosphate + CoA. It catalyses the reaction sn-glycerol 3-phosphate + octadecanoyl-CoA = 1-octadecanoyl-sn-glycero-3-phosphate + CoA. The enzyme catalyses sn-glycerol 3-phosphate + hexadecanoyl-CoA = 1-hexadecanoyl-sn-glycero-3-phosphate + CoA. The catalysed reaction is dodecanoyl-CoA + sn-glycerol 3-phosphate = 1-dodecanoyl-sn-glycerol 3-phosphate + CoA. It carries out the reaction 1-acyl-sn-glycero-3-phospho-(1'-sn-glycerol) + an acyl-CoA = a 1,2-diacyl-sn-glycero-3-phospho-(1'-sn-glycerol) + CoA. It functions in the pathway phospholipid metabolism; CDP-diacylglycerol biosynthesis; CDP-diacylglycerol from sn-glycerol 3-phosphate: step 1/3. In terms of biological role, mitochondrial membrane protein that catalyzes the essential first step of biosynthesis of glycerolipids such as triglycerides, phosphatidic acids and lysophosphatidic acids. Esterifies acyl-group from acyl-coenzyme A (acyl-CoA) to the sn-1 position of glycerol-3-phosphate, to produce lysophosphatidic acid. Has a narrow hydrophobic binding cleft that selects for a linear acyl chain. Catalytic activity is higher for substrates with a 16-carbon acyl chain. This Mus musculus (Mouse) protein is Glycerol-3-phosphate acyltransferase 1, mitochondrial.